A 441-amino-acid chain; its full sequence is Xylose isomerase (441 aa).

Residues His-99 and Asp-102 contribute to the active site. Residues Glu-230, Glu-266, Asp-294, Asp-305, Asp-307, and Asp-337 each contribute to the Mn(2+) site.

It belongs to the xylose isomerase family. In terms of assembly, homotetramer. Requires Mn(2+) as cofactor.

It is found in the cytoplasm. It carries out the reaction alpha-D-xylose = alpha-D-xylulofuranose. The sequence is that of Xylose isomerase (xylA) from Geobacillus stearothermophilus (Bacillus stearothermophilus).